The chain runs to 235 residues: Keratin-associated protein 4-16 (235 aa).

The segment at 1–132 is 16 X 5 AA repeats of C-C-[GIKRQVHEML]-[SPTRV]-[STVQRCP]; sequence MCSSKMPCSP…CCCPCCCLRP (132 aa). Tandem repeats lie at residues 23 to 27, 28 to 32, 33 to 37, 48 to 52, 53 to 57, 58 to 62, 63 to 67, 68 to 72, 78 to 82, 83 to 87, 88 to 92, 93 to 97, 103 to 107, 108 to 112, 118 to 122, and 128 to 132. Over residues 203–224 the composition is skewed to pro residues; that stretch reads SPSPSLPSLSPPLPSPPLPSPH. Residues 203–235 are disordered; it reads SPSPSLPSLSPPLPSPPLPSPHFPSVNPKSMLQ.

The protein belongs to the KRTAP type 4 family. As to quaternary structure, interacts with hair keratins.

In the hair cortex, hair keratin intermediate filaments are embedded in an interfilamentous matrix, consisting of hair keratin-associated proteins (KRTAP), which are essential for the formation of a rigid and resistant hair shaft through their extensive disulfide bond cross-linking with abundant cysteine residues of hair keratins. The matrix proteins include the high-sulfur and high-glycine-tyrosine keratins. This Homo sapiens (Human) protein is Keratin-associated protein 4-16.